Here is a 465-residue protein sequence, read N- to C-terminus: Biotin biosynthesis bifunctional protein BioCD (465 aa).

The segment at Met1–Gly254 is malonyl-ACP O-methyltransferase. ATP contacts are provided by residues Asp234 and Gly263 to Leu268. The DTB synthetase stretch occupies residues Val255–Arg465. Thr267 serves as a coordination point for Mg(2+). Lys283 is a catalytic residue. Thr287 contacts substrate. Residues Asp295, Glu351 to Gly354, and Pro435 to Leu437 each bind ATP. Mg(2+) contacts are provided by Asp295 and Glu351.

It in the N-terminal section; belongs to the methyltransferase superfamily. In the C-terminal section; belongs to the dethiobiotin synthetase family. Requires Mg(2+) as cofactor.

It is found in the cytoplasm. The enzyme catalyses (7R,8S)-7,8-diammoniononanoate + CO2 + ATP = (4R,5S)-dethiobiotin + ADP + phosphate + 3 H(+). The catalysed reaction is malonyl-[ACP] + S-adenosyl-L-methionine = malonyl-[ACP] methyl ester + S-adenosyl-L-homocysteine. It participates in cofactor biosynthesis; biotin biosynthesis; biotin from 7,8-diaminononanoate: step 1/2. Its pathway is cofactor biosynthesis; biotin biosynthesis. In terms of biological role, converts the free carboxyl group of a malonyl-thioester to its methyl ester by transfer of a methyl group from S-adenosyl-L-methionine (SAM). It allows synthesis of pimeloyl-ACP via the fatty acid synthetic pathway. Catalyzes a mechanistically unusual reaction, the ATP-dependent insertion of CO2 between the N7 and N8 nitrogen atoms of 7,8-diaminopelargonic acid (DAPA, also called 7,8-diammoniononanoate) to form a ureido ring. This Bordetella avium (strain 197N) protein is Biotin biosynthesis bifunctional protein BioCD.